The following is a 383-amino-acid chain: Succinyl-diaminopimelate desuccinylase (383 aa).

Residue His-73 coordinates Zn(2+). Asp-75 is an active-site residue. Residue Asp-107 coordinates Zn(2+). Glu-141 functions as the Proton acceptor in the catalytic mechanism. Zn(2+)-binding residues include Glu-142, Glu-170, and His-356.

It belongs to the peptidase M20A family. DapE subfamily. In terms of assembly, homodimer. The cofactor is Zn(2+). Requires Co(2+) as cofactor.

It carries out the reaction N-succinyl-(2S,6S)-2,6-diaminopimelate + H2O = (2S,6S)-2,6-diaminopimelate + succinate. It functions in the pathway amino-acid biosynthesis; L-lysine biosynthesis via DAP pathway; LL-2,6-diaminopimelate from (S)-tetrahydrodipicolinate (succinylase route): step 3/3. In terms of biological role, catalyzes the hydrolysis of N-succinyl-L,L-diaminopimelic acid (SDAP), forming succinate and LL-2,6-diaminopimelate (DAP), an intermediate involved in the bacterial biosynthesis of lysine and meso-diaminopimelic acid, an essential component of bacterial cell walls. This Pseudomonas fluorescens (strain ATCC BAA-477 / NRRL B-23932 / Pf-5) protein is Succinyl-diaminopimelate desuccinylase.